Here is a 359-residue protein sequence, read N- to C-terminus: UDP-3-O-acylglucosamine N-acyltransferase (359 aa).

The active-site Proton acceptor is the H247.

The protein belongs to the transferase hexapeptide repeat family. LpxD subfamily. As to quaternary structure, homotrimer.

The enzyme catalyses a UDP-3-O-[(3R)-3-hydroxyacyl]-alpha-D-glucosamine + a (3R)-hydroxyacyl-[ACP] = a UDP-2-N,3-O-bis[(3R)-3-hydroxyacyl]-alpha-D-glucosamine + holo-[ACP] + H(+). It functions in the pathway bacterial outer membrane biogenesis; LPS lipid A biosynthesis. In terms of biological role, catalyzes the N-acylation of UDP-3-O-acylglucosamine using 3-hydroxyacyl-ACP as the acyl donor. Is involved in the biosynthesis of lipid A, a phosphorylated glycolipid that anchors the lipopolysaccharide to the outer membrane of the cell. The chain is UDP-3-O-acylglucosamine N-acyltransferase from Chlorobium chlorochromatii (strain CaD3).